We begin with the raw amino-acid sequence, 376 residues long: Chaperone protein DnaJ (376 aa).

Residues 5-70 (DYYEVLGVAR…QKRAAYDQFG (66 aa)) enclose the J domain. The CR-type zinc-finger motif lies at 134-212 (GTSVKIKVPT…CHGHGRVEET (79 aa)). 8 residues coordinate Zn(2+): Cys147, Cys150, Cys164, Cys167, Cys186, Cys189, Cys200, and Cys203. CXXCXGXG motif repeat units lie at residues 147–154 (CTNCGGSG), 164–171 (CNTCGGHG), 186–193 (CPTCRGQG), and 200–207 (CNKCHGHG).

Belongs to the DnaJ family. In terms of assembly, homodimer. Zn(2+) is required as a cofactor.

The protein resides in the cytoplasm. Its function is as follows. Participates actively in the response to hyperosmotic and heat shock by preventing the aggregation of stress-denatured proteins and by disaggregating proteins, also in an autonomous, DnaK-independent fashion. Unfolded proteins bind initially to DnaJ; upon interaction with the DnaJ-bound protein, DnaK hydrolyzes its bound ATP, resulting in the formation of a stable complex. GrpE releases ADP from DnaK; ATP binding to DnaK triggers the release of the substrate protein, thus completing the reaction cycle. Several rounds of ATP-dependent interactions between DnaJ, DnaK and GrpE are required for fully efficient folding. Also involved, together with DnaK and GrpE, in the DNA replication of plasmids through activation of initiation proteins. This Teredinibacter turnerae (strain ATCC 39867 / T7901) protein is Chaperone protein DnaJ.